A 37-amino-acid chain; its full sequence is Cytochrome b6-f complex subunit 5 (37 aa).

Residues 5–25 (LLSGIVLGLIPITLAGLFVTA) traverse the membrane as a helical segment.

Belongs to the PetG family. In terms of assembly, the 4 large subunits of the cytochrome b6-f complex are cytochrome b6, subunit IV (17 kDa polypeptide, PetD), cytochrome f and the Rieske protein, while the 4 small subunits are PetG, PetL, PetM and PetN. The complex functions as a dimer.

The protein localises to the plastid. It is found in the chloroplast thylakoid membrane. Functionally, component of the cytochrome b6-f complex, which mediates electron transfer between photosystem II (PSII) and photosystem I (PSI), cyclic electron flow around PSI, and state transitions. PetG is required for either the stability or assembly of the cytochrome b6-f complex. This chain is Cytochrome b6-f complex subunit 5, found in Zygnema circumcarinatum (Green alga).